The following is a 282-amino-acid chain: Para-Rep C1 (282 aa).

Residues Met-1–Pro-99 enclose the CRESS-DNA virus Rep endonuclease domain. The short motif at Cys-7–Leu-10 is the RCR-1 element. The a divalent metal cation site is built by Glu-38 and His-47. Residues His-47–Gln-49 carry the RCR-2 motif. The short motif at Lys-56–Lys-77 is the Nuclear localization signal element. The active-site For DNA cleavage activity is Tyr-86. Positions Tyr-86 to Lys-89 match the RCR-3 motif. Ser-94 contacts a divalent metal cation. Gly-174 to Ser-182 is an ATP binding site.

This sequence belongs to the nanoviridea/circoviridae replication-associated protein family. Homooligomer (Potential). Rep binds to repeated DNA motifs (iterons). The cofactor is Mg(2+). It depends on Mn(2+) as a cofactor.

The protein localises to the host nucleus. The catalysed reaction is ATP + H2O = ADP + phosphate + H(+). Initiates and terminates the replication only of its own subviral DNA molecule. The closed circular ssDNA genome is first converted to a superhelical dsDNA. Rep binds a specific hairpin at the genome origin of replication. Introduces an endonucleolytic nick within the intergenic region of the genome, thereby initiating the rolling circle replication (RCR). Following cleavage, binds covalently to the 5'-phosphate of DNA as a tyrosyl ester. The cleavage gives rise to a free 3'-OH that serves as a primer for the cellular DNA polymerase. The polymerase synthesizes the (+) strand DNA by rolling circle mechanism. After one round of replication, a Rep-catalyzed nucleotidyl transfer reaction releases a circular single-stranded virus genome, thereby terminating the replication. Displays origin-specific DNA cleavage, nucleotidyl transferase, ATPase and helicase activities. The chain is Para-Rep C1 (C1) from Faba bean necrotic yellows C11 alphasatellite (FBNYC11A).